The primary structure comprises 307 residues: sn-1-specific diacylglycerol lipase ABHD11 (307 aa).

The transit peptide at 1-34 (MLRWARAWRVPRGVLGASSPRRLAVPVTFCSSRS) directs the protein to the mitochondrion. Lys79 is subject to N6-succinyllysine. Catalysis depends on Ser133, which acts as the Charge relay system. Lys196 is subject to N6-succinyllysine. Catalysis depends on charge relay system residues Asp229 and His288.

This sequence belongs to the AB hydrolase superfamily. In terms of assembly, interacts with OGDH and DLST; this interaction maintains the functional lipoylation of the 2-oxoglutarate dehydrogenase complex. Phosphorylated. As to expression, expressed in white adipose tissues.

It localises to the mitochondrion. It is found in the mitochondrion matrix. It catalyses the reaction 1-octadecanoyl-2-(5Z,8Z,11Z,14Z-eicosatetraenoyl)-sn-glycerol + H2O = 2-(5Z,8Z,11Z,14Z-eicosatetraenoyl)-glycerol + octadecanoate + H(+). It carries out the reaction a 1,2-diacyl-sn-glycerol + H2O = a 2-acylglycerol + a fatty acid + H(+). The enzyme catalyses a 1,3-diacyl-sn-glycerol + H2O = a 1-acyl-sn-glycerol + a fatty acid + H(+). The catalysed reaction is 1-octadecanoyl-2-(9Z-octadecenoyl)-sn-glycerol + H2O = 2-(9Z-octadecenoyl)-glycerol + octadecanoate + H(+). It catalyses the reaction 1-octadecanoyl-2-(4Z,7Z,10Z,13Z,16Z,19Z-docosahexaenoyl)-sn-glycerol + H2O = 2-(4Z,7Z,10Z,13Z,16Z,19Z-docosahexaenoyl)-glycerol + octadecanoate + H(+). It carries out the reaction 1,2-didecanoylglycerol + H2O = decanoylglycerol + decanoate + H(+). Functionally, catalyzes the hydrolysis of diacylglycerol in vitro and may function as a key regulator in lipid metabolism, namely by regulating the intracellular levels of diacylglycerol. 1,2-diacyl-sn-glycerols are the preferred substrate over 1,3-diacyl-sn-glycerols. The enzyme hydrolyzes stearate in preference to palmitate from the sn-1 position of 1,2-diacyl-sn-glycerols. Maintains the functional lipoylation of the 2-oxoglutarate dehydrogenase complex (OGDHc) through its interaction with the OGDHc by preventing the formation of lipoyl adducts. In addition, is also required for the expansion and differentiation of embryonic stem cells (ESCs). The polypeptide is sn-1-specific diacylglycerol lipase ABHD11 (Mus musculus (Mouse)).